A 437-amino-acid chain; its full sequence is Trigger factor (437 aa).

The 86-residue stretch at 163–248 (GDIAVINFEG…LNQIKAKVLP (86 aa)) folds into the PPIase FKBP-type domain.

Belongs to the FKBP-type PPIase family. Tig subfamily.

It is found in the cytoplasm. The catalysed reaction is [protein]-peptidylproline (omega=180) = [protein]-peptidylproline (omega=0). In terms of biological role, involved in protein export. Acts as a chaperone by maintaining the newly synthesized protein in an open conformation. Functions as a peptidyl-prolyl cis-trans isomerase. This chain is Trigger factor, found in Bdellovibrio bacteriovorus (strain ATCC 15356 / DSM 50701 / NCIMB 9529 / HD100).